Reading from the N-terminus, the 125-residue chain is Photosystem II extrinsic protein U (125 aa).

The signal sequence occupies residues methionine 1–alanine 29.

The protein belongs to the PsbU family. PSII is composed of 1 copy each of membrane proteins PsbA, PsbB, PsbC, PsbD, PsbE, PsbF, PsbH, PsbI, PsbJ, PsbK, PsbL, PsbM, PsbT, PsbX, PsbY, PsbZ, Psb30/Ycf12, peripheral proteins PsbO, CyanoQ (PsbQ), PsbU, PsbV and a large number of cofactors. It forms dimeric complexes.

The protein resides in the cellular thylakoid membrane. Functionally, one of the extrinsic, lumenal subunits of photosystem II (PSII). PSII is a light-driven water plastoquinone oxidoreductase, using light energy to abstract electrons from H(2)O, generating a proton gradient subsequently used for ATP formation. The extrinsic proteins stabilize the structure of photosystem II oxygen-evolving complex (OEC), the ion environment of oxygen evolution and protect the OEC against heat-induced inactivation. In Synechococcus sp. (strain WH7803), this protein is Photosystem II extrinsic protein U.